Here is a 286-residue protein sequence, read N- to C-terminus: 4-diphosphocytidyl-2-C-methyl-D-erythritol kinase (286 aa).

Lys11 is an active-site residue. 93 to 103 (PFGAGLGGGSS) contributes to the ATP binding site. The active site involves Asp135.

It belongs to the GHMP kinase family. IspE subfamily.

The catalysed reaction is 4-CDP-2-C-methyl-D-erythritol + ATP = 4-CDP-2-C-methyl-D-erythritol 2-phosphate + ADP + H(+). It functions in the pathway isoprenoid biosynthesis; isopentenyl diphosphate biosynthesis via DXP pathway; isopentenyl diphosphate from 1-deoxy-D-xylulose 5-phosphate: step 3/6. Its function is as follows. Catalyzes the phosphorylation of the position 2 hydroxy group of 4-diphosphocytidyl-2C-methyl-D-erythritol. The protein is 4-diphosphocytidyl-2-C-methyl-D-erythritol kinase of Chlorobaculum tepidum (strain ATCC 49652 / DSM 12025 / NBRC 103806 / TLS) (Chlorobium tepidum).